The chain runs to 28 residues: Seed allergenic protein 1 (28 aa).

Residues 1–28 (VTXEEGXYSISDQSKVGEQXIRSPDREM) are disordered.

This chain is Seed allergenic protein 1, found in Prunus dulcis (Almond).